A 499-amino-acid polypeptide reads, in one-letter code: Hepatic triacylglycerol lipase (499 aa).

The first 22 residues, 1–22, serve as a signal peptide directing secretion; the sequence is MDTSPLCFSILLVLCIFIQSSA. Asn42 and Asn78 each carry an N-linked (GlcNAc...) asparagine glycan. Ser168 (nucleophile) is an active-site residue. Asp194 acts as the Charge relay system in catalysis. The interval 254 to 277 is essential for determining substrate specificity; it reads CHFLELYRHIAQHGFNAITQTIKC. His279 serves as the catalytic Charge relay system. The PLAT domain occupies 352 to 486; that stretch reads YHYQFKIQFI…RPTQEKIFVK (135 aa). Asn362 and Asn397 each carry an N-linked (GlcNAc...) asparagine glycan.

This sequence belongs to the AB hydrolase superfamily. Lipase family. As to quaternary structure, homodimer.

It is found in the secreted. It carries out the reaction a triacylglycerol + H2O = a diacylglycerol + a fatty acid + H(+). It catalyses the reaction a 1-acyl-sn-glycero-3-phosphocholine + H2O = sn-glycerol 3-phosphocholine + a fatty acid + H(+). The catalysed reaction is a 1,2-diacyl-sn-glycero-3-phosphocholine + H2O = a 2-acyl-sn-glycero-3-phosphocholine + a fatty acid + H(+). The enzyme catalyses 1,2,3-tri-(9Z-octadecenoyl)-glycerol + H2O = di-(9Z)-octadecenoylglycerol + (9Z)-octadecenoate + H(+). It carries out the reaction 1,2-di-(9Z-octadecenoyl)-sn-glycero-3-phosphocholine + H2O = (9Z-octadecenoyl)-sn-glycero-3-phosphocholine + (9Z)-octadecenoate + H(+). It catalyses the reaction 1,2,3-tributanoylglycerol + H2O = dibutanoylglycerol + butanoate + H(+). The catalysed reaction is 1,2-dihexadecanoyl-sn-glycero-3-phosphocholine + H2O = hexadecanoyl-sn-glycero-3-phosphocholine + hexadecanoate + H(+). The enzyme catalyses 1,2-di-(9Z-octadecenoyl)-sn-glycerol + H2O = 2-(9Z-octadecenoyl)-glycerol + (9Z)-octadecenoate + H(+). It carries out the reaction 1,2,3-tri-(9Z-octadecenoyl)-glycerol + H2O = 2,3-di-(9Z)-octadecenoyl-sn-glycerol + (9Z)-octadecenoate + H(+). It catalyses the reaction 1-(9Z-octadecenoyl)-sn-glycero-3-phospho-L-serine + H2O = sn-glycero-3-phospho-L-serine + (9Z)-octadecenoate + H(+). The catalysed reaction is 1-hexadecanoyl-sn-glycero-3-phosphocholine + H2O = sn-glycerol 3-phosphocholine + hexadecanoate + H(+). The enzyme catalyses 1,3-di-(9Z-octadecenoyl)-glycerol + H2O = 3-(9Z-octadecenoyl)-sn-glycerol + (9Z)-octadecenoate + H(+). Phospholipase A1 and triacylglycerol lipase are inhibited by sphingomyelin. Catalyzes the hydrolysis of triglycerides and phospholipids present in circulating plasma lipoproteins, including chylomicrons, intermediate density lipoproteins (IDL), low density lipoproteins (LDL) of large size and high density lipoproteins (HDL), releasing free fatty acids (FFA) and smaller lipoprotein particles. Also exhibits lysophospholipase activity. Can hydrolyze both neutral lipid and phospholipid substrates but shows a greater binding affinity for neutral lipid substrates than phospholipid substrates. In native LDL, preferentially hydrolyzes the phosphatidylcholine species containing polyunsaturated fatty acids at sn-2 position. The protein is Hepatic triacylglycerol lipase (LIPC) of Homo sapiens (Human).